The primary structure comprises 145 residues: Maximins 3/H3 type 1 (145 aa).

The first 18 residues, 1-18 (MNFKYIVAVSFLIASAYA), serve as a signal peptide directing secretion. Propeptides lie at residues 19–43 (RSVQ…LREI) and 74–124 (RIAE…KEKR). Isoleucine amide is present on isoleucine 144.

Belongs to the bombinin family. Expressed by the skin glands.

The protein localises to the secreted. Functionally, maximin-3 shows antibacterial activity against both Gram-positive and Gram-negative bacteria. It also shows antimicrobial activity against the fungus C.albicans, but not against A.flavus nor P.uticale. It has little hemolytic activity. It possess a significant cytotoxicity against tumor cell lines. It possess a significant anti-HIV activity. It shows high spermicidal activity. Maximin-H3 shows antibacterial activity against both Gram-positive and Gram-negative bacteria. It also shows antimicrobial activity against the fungus C.albicans. Shows strong hemolytic activity. This is Maximins 3/H3 type 1 from Bombina maxima (Giant fire-bellied toad).